We begin with the raw amino-acid sequence, 300 residues long: MKIGVIMGGISTEREVSLNSGREVIKYLELLEHEIIPIIIDKKEDVMEKAKGIDFAFLALHGKFGEDGTVQSVLQTLDIPYSGCGPLTSAICMDKDMTKKILKYANINTADWVNVTNAEDIDYEAIEKIGYPVFVKPNSGGSSVATNLVKNKEGIKEAVELALKYDKEVMIENYTKGEEITCCMLNGKMLPVLAIRPHAEFFDYTAKYADGGSDEVVIELEENLHKKVEEMALACWKELKCEVYVRVDMIVKEGVPYVLELNTLPGMTKNSLFPKSANAVGISFAELLNSIVKYSLEVER.

One can recognise an ATP-grasp domain in the interval 99–293; the sequence is KKILKYANIN…FAELLNSIVK (195 aa). 126 to 181 serves as a coordination point for ATP; sequence IEKIGYPVFVKPNSGGSSVATNLVKNKEGIKEAVELALKYDKEVMIENYTKGEEIT. The Mg(2+) site is built by Asp-248, Glu-260, and Asn-262.

The protein belongs to the D-alanine--D-alanine ligase family. Mg(2+) is required as a cofactor. Mn(2+) serves as cofactor.

It is found in the cytoplasm. The catalysed reaction is 2 D-alanine + ATP = D-alanyl-D-alanine + ADP + phosphate + H(+). It participates in cell wall biogenesis; peptidoglycan biosynthesis. Cell wall formation. The chain is D-alanine--D-alanine ligase from Clostridium botulinum (strain Loch Maree / Type A3).